Here is a 640-residue protein sequence, read N- to C-terminus: 1-deoxy-D-xylulose-5-phosphate synthase (640 aa).

Residues histidine 79 and 120–122 (GHS) each bind thiamine diphosphate. Aspartate 151 serves as a coordination point for Mg(2+). Thiamine diphosphate-binding positions include 152-153 (GG), asparagine 180, tyrosine 288, and glutamate 372. Asparagine 180 contacts Mg(2+).

It belongs to the transketolase family. DXPS subfamily. As to quaternary structure, homodimer. Requires Mg(2+) as cofactor. Thiamine diphosphate serves as cofactor.

The enzyme catalyses D-glyceraldehyde 3-phosphate + pyruvate + H(+) = 1-deoxy-D-xylulose 5-phosphate + CO2. It functions in the pathway metabolic intermediate biosynthesis; 1-deoxy-D-xylulose 5-phosphate biosynthesis; 1-deoxy-D-xylulose 5-phosphate from D-glyceraldehyde 3-phosphate and pyruvate: step 1/1. Catalyzes the acyloin condensation reaction between C atoms 2 and 3 of pyruvate and glyceraldehyde 3-phosphate to yield 1-deoxy-D-xylulose-5-phosphate (DXP). This chain is 1-deoxy-D-xylulose-5-phosphate synthase, found in Nitrosococcus oceani (strain ATCC 19707 / BCRC 17464 / JCM 30415 / NCIMB 11848 / C-107).